The chain runs to 806 residues: Leucine--tRNA ligase (806 aa).

Positions 38–48 match the 'HIGH' region motif; the sequence is PYPSGEIHMGH. The short motif at 572–576 is the 'KMSKS' region element; the sequence is KMSKS. Lys575 serves as a coordination point for ATP.

The protein belongs to the class-I aminoacyl-tRNA synthetase family.

Its subcellular location is the cytoplasm. The catalysed reaction is tRNA(Leu) + L-leucine + ATP = L-leucyl-tRNA(Leu) + AMP + diphosphate. The sequence is that of Leucine--tRNA ligase from Helicobacter pylori (strain ATCC 700392 / 26695) (Campylobacter pylori).